Here is a 460-residue protein sequence, read N- to C-terminus: Serine/threonine-protein kinase cds1 (460 aa).

The FHA domain occupies 60 to 116 (WRFGRHKSCEVVLNGPRVSNFHFEIYQGHRNDSDESENVVFLHDHSSNGTFLNFERL). Residues 167-433 (YEIIRTLGSG…ESEALQHPWF (267 aa)) form the Protein kinase domain. Residues 173 to 181 (LGSGTFAVV) and K196 each bind ATP. The active-site Proton acceptor is D294. The span at 438 to 453 (THEHRTPPSSSEHEAT) shows a compositional bias: basic and acidic residues. A disordered region spans residues 438 to 460 (THEHRTPPSSSEHEATEQLNSSS). T443 is modified (phosphothreonine).

Belongs to the protein kinase superfamily. CAMK Ser/Thr protein kinase family. CHEK2 subfamily. As to quaternary structure, interacts with rad26. Autophosphorylated.

It catalyses the reaction L-seryl-[protein] + ATP = O-phospho-L-seryl-[protein] + ADP + H(+). The catalysed reaction is L-threonyl-[protein] + ATP = O-phospho-L-threonyl-[protein] + ADP + H(+). Functionally, has a role in the DNA replication-monitoring S/G2 checkpoint system. It is responsible for blocking mitosis in the S phase. It monitors DNA synthesis by interacting with DNA polymerase alpha and sends a signal to block the onset of mitosis while DNA synthesis is in progress. Phosphorylates rad60 and dna2. The chain is Serine/threonine-protein kinase cds1 (cds1) from Schizosaccharomyces pombe (strain 972 / ATCC 24843) (Fission yeast).